A 281-amino-acid chain; its full sequence is Protease HtpX homolog (281 aa).

Helical transmembrane passes span 6–26 (VWLL…AIGG) and 28–48 (SGAL…YYYS). Position 130 (His130) interacts with Zn(2+). The active site involves Glu131. His134 is a binding site for Zn(2+). 2 helical membrane passes run 140 to 160 (VLIG…SNIV) and 181 to 201 (IASL…QLAI). A Zn(2+)-binding site is contributed by Glu206.

It belongs to the peptidase M48B family. Zn(2+) is required as a cofactor.

It localises to the cell membrane. This is Protease HtpX homolog from Pelotomaculum thermopropionicum (strain DSM 13744 / JCM 10971 / SI).